The sequence spans 431 residues: Protein translocase subunit SecY (431 aa).

10 helical membrane-spanning segments follow: residues 18–38 (IIFTLLMLIVFRLGSFIPVPH), 64–84 (LFNFSILAMGIMPYITASIII), 116–136 (FTIVLGFIQALGMSYGFNNMA), 146–166 (VGTYLLIAIVLTAGTAFLMWL), 175–195 (VGNGISIIIFAGIVAGIPQTI), 214–234 (IIKVVVILVAILAIVVGVIFI), 262–282 (LPLKVNPAGVIPVIFAVAFIT), 309–329 (PVGMGVYAALIIAFTYFYAFV), 369–389 (FVGSIFLAVIAILPVLFVNIA), and 390–410 (GLPSSAQIGGTSLLIVIGVAL).

Belongs to the SecY/SEC61-alpha family. In terms of assembly, component of the Sec protein translocase complex. Heterotrimer consisting of SecY, SecE and SecG subunits. The heterotrimers can form oligomers, although 1 heterotrimer is thought to be able to translocate proteins. Interacts with the ribosome. Interacts with SecDF, and other proteins may be involved. Interacts with SecA.

The protein resides in the cell membrane. Its function is as follows. The central subunit of the protein translocation channel SecYEG. Consists of two halves formed by TMs 1-5 and 6-10. These two domains form a lateral gate at the front which open onto the bilayer between TMs 2 and 7, and are clamped together by SecE at the back. The channel is closed by both a pore ring composed of hydrophobic SecY resides and a short helix (helix 2A) on the extracellular side of the membrane which forms a plug. The plug probably moves laterally to allow the channel to open. The ring and the pore may move independently. This is Protein translocase subunit SecY from Bacillus licheniformis (strain ATCC 14580 / DSM 13 / JCM 2505 / CCUG 7422 / NBRC 12200 / NCIMB 9375 / NCTC 10341 / NRRL NRS-1264 / Gibson 46).